A 290-amino-acid chain; its full sequence is 6-carboxyhexanoate--CoA ligase (290 aa).

Belongs to the BioW family. As to quaternary structure, homodimer. Mg(2+) serves as cofactor.

The enzyme catalyses heptanedioate + ATP + CoA = 6-carboxyhexanoyl-CoA + AMP + diphosphate. It participates in metabolic intermediate metabolism; pimeloyl-CoA biosynthesis; pimeloyl-CoA from pimelate: step 1/1. In terms of biological role, catalyzes the transformation of pimelate into pimeloyl-CoA with concomitant hydrolysis of ATP to AMP. In Bacillus amyloliquefaciens (Bacillus velezensis), this protein is 6-carboxyhexanoate--CoA ligase.